The primary structure comprises 583 residues: Pentatricopeptide repeat-containing protein At3g59040 (583 aa).

PPR repeat units lie at residues 138–172 (SEIDFLMLITAYGKLGNFNGAERVLSVLSKMGSTP), 173–207 (NVISYTALMESYGRGGKCNNAEAIFRRMQSSGPEP), 208–242 (SAITYQIILKTFVEGDKFKEAEEVFETLLDEKKSP), 246–280 (DQKMYHMMIYMYKKAGNYEKARKVFSSMVGKGVPQ), 281–312 (STVTYNSLMSFETSYKEVSKIYDQMQRSDIQP), 313–347 (DVVSYALLIKAYGRARREEEALSVFEEMLDAGVRP), 348–382 (THKAYNILLDAFAISGMVEQAKTVFKSMRRDRIFP), 383–417 (DLWSYTTMLSAYVNASDMEGAEKFFKRIKVDGFEP), 418–452 (NIVTYGTLIKGYAKANDVEKMMEVYEKMRLSGIKA), and 453–487 (NQTILTTIMDASGRCKNFGSALGWYKEMESCGVPP). Residues 525-583 (VYGSDDDEEGVEDISSESSDDEDEGDDDDDDARETVLYDKPQEGSLGYGSLQTEELVGL) are disordered. The span at 528–556 (SDDDEEGVEDISSESSDDEDEGDDDDDDA) shows a compositional bias: acidic residues. Residues 557 to 566 (RETVLYDKPQ) are compositionally biased toward basic and acidic residues.

This sequence belongs to the PPR family. P subfamily.

In Arabidopsis thaliana (Mouse-ear cress), this protein is Pentatricopeptide repeat-containing protein At3g59040.